A 919-amino-acid polypeptide reads, in one-letter code: Hyphally regulated cell wall protein 1 (919 aa).

The first 20 residues, 1-20 (MKVVSNFIFTILLTLNLSAA), serve as a signal peptide directing secretion. Asparagine 236 carries an N-linked (GlcNAc...) asparagine glycan. Positions 332 to 483 (SAPESESDLN…QSITSSPGQS (152 aa)) are disordered. A compositionally biased stretch (low complexity) spans 344–392 (TTSSIETSSYSSAATESSVVSESSSAVDSLTSSSLSSKSESSDVVSSTT). The segment covering 393-414 (NIESSSTAIETTMNSESSTDAG) has biased composition (polar residues). The segment covering 415 to 475 (SSSISQSESS…SNALSSTEQS (61 aa)) has biased composition (low complexity). N-linked (GlcNAc...) asparagine glycosylation is found at asparagine 449, asparagine 488, asparagine 580, asparagine 585, asparagine 607, asparagine 619, asparagine 631, asparagine 639, asparagine 647, and asparagine 693. Over residues 567–590 (DATTTTTTSTGGDNSTGGNESGSN) the composition is skewed to low complexity. The disordered stretch occupies residues 567 to 839 (DATTTTTTST…VANPVTTSTE (273 aa)). 2 stretches are compositionally biased toward gly residues: residues 607 to 665 (NGSG…GSGS) and 675 to 707 (EGSG…GSGS). Residues 708–724 (QSGSESGSNSGSNEGSN) show a composition bias toward low complexity. Over residues 725–783 (PGAGNGSNEGSGQGSGNGSEAGSGQGSGPNNGSGSGHNDGSGSGSNQGSNPGAGSGSGS) the composition is skewed to gly residues. Asparagine 729, asparagine 741, and asparagine 755 each carry an N-linked (GlcNAc...) asparagine glycan. A compositionally biased stretch (low complexity) spans 784 to 798 (ESGSNAGSHSGSNEG). The segment covering 799–811 (AKTDSIEGFHTES) has biased composition (basic and acidic residues). Residues 823–833 (ATVTGNSVANP) are compositionally biased toward polar residues. N-linked (GlcNAc...) asparagine glycans are attached at residues asparagine 879 and asparagine 895. The GPI-anchor amidated asparagine moiety is linked to residue asparagine 895. Residues 896–919 (GSSIVTGGKSILFGLIVSMVVLFM) constitute a propeptide, removed in mature form.

The protein belongs to the HYR1/IFF family. As to quaternary structure, component of a multiprotein complex of 250 kDa composed of at least HYR1, MP65, and PRA1. The GPI-anchor is attached to the protein in the endoplasmic reticulum and serves to target the protein to the cell surface. There, the glucosamine-inositol phospholipid moiety is cleaved off and the GPI-modified mannoprotein is covalently attached via its lipidless GPI glycan remnant to the 1,6-beta-glucan of the outer cell wall layer.

It is found in the secreted. The protein resides in the cell wall. Its subcellular location is the membrane. Functionally, GPI-anchored hyphal cell wall protein required for hyphal growth and virulence. Involved in innate immune cell evasion through conferring resistance to neutrophil killing. Binds kininogen, the proteinaceous kinin precursor, and contributes to trigger the kinin-forming cascade on the cell surface. Production of kinins is often involved in the human host defense against microbial infections. This Candida albicans (strain SC5314 / ATCC MYA-2876) (Yeast) protein is Hyphally regulated cell wall protein 1 (HYR1).